Reading from the N-terminus, the 311-residue chain is Putative dihydroorotate dehydrogenase A (fumarate) (311 aa).

Substrate is bound by residues Lys-45, 69-73, and Asn-128; that span reads NSMGL. 45 to 46 serves as a coordination point for FMN; it reads KT. FMN is bound at residue Asn-128. Residue Cys-131 is the Nucleophile of the active site. Positions 165 and 193 each coordinate FMN. 194-195 contacts substrate; it reads NS. FMN-binding positions include Gly-220, 248 to 249, and 270 to 271; these read GG and GT.

The protein belongs to the dihydroorotate dehydrogenase family. Type 1 subfamily. In terms of assembly, homodimer. FMN serves as cofactor.

It is found in the cytoplasm. The catalysed reaction is (S)-dihydroorotate + fumarate = orotate + succinate. It functions in the pathway pyrimidine metabolism; UMP biosynthesis via de novo pathway. Its function is as follows. Catalyzes the conversion of dihydroorotate to orotate with fumarate as the electron acceptor. The sequence is that of Putative dihydroorotate dehydrogenase A (fumarate) (pyrD) from Streptococcus pyogenes serotype M18 (strain MGAS8232).